Reading from the N-terminus, the 142-residue chain is Large ribosomal subunit protein uL13 (142 aa).

It belongs to the universal ribosomal protein uL13 family. Part of the 50S ribosomal subunit.

In terms of biological role, this protein is one of the early assembly proteins of the 50S ribosomal subunit, although it is not seen to bind rRNA by itself. It is important during the early stages of 50S assembly. The chain is Large ribosomal subunit protein uL13 from Edwardsiella ictaluri (strain 93-146).